The chain runs to 423 residues: UPF0597 protein TTE0269 (423 aa).

The protein belongs to the UPF0597 family.

The polypeptide is UPF0597 protein TTE0269 (Caldanaerobacter subterraneus subsp. tengcongensis (strain DSM 15242 / JCM 11007 / NBRC 100824 / MB4) (Thermoanaerobacter tengcongensis)).